Reading from the N-terminus, the 446-residue chain is Probable D-serine dehydratase (446 aa).

K113 bears the N6-(pyridoxal phosphate)lysine mark.

Belongs to the serine/threonine dehydratase family. DsdA subfamily. It depends on pyridoxal 5'-phosphate as a cofactor.

It carries out the reaction D-serine = pyruvate + NH4(+). This chain is Probable D-serine dehydratase, found in Burkholderia lata (strain ATCC 17760 / DSM 23089 / LMG 22485 / NCIMB 9086 / R18194 / 383).